Reading from the N-terminus, the 371-residue chain is Gamma-tocopherol methyltransferase, chloroplastic (371 aa).

The N-terminal 65 residues, 1 to 65 (MAAAPVFFPS…NSNRIASRLQ (65 aa)), are a transit peptide targeting the chloroplast. The SAM motif I stretch occupies residues 153–162 (IVDVGCGIGG). The segment at 216 to 224 (GQFDLVWSM) is SAM motif II. An SAM motif III region spans residues 243 to 252 (VAAPGATIII).

It belongs to the class I-like SAM-binding methyltransferase superfamily. gTMT family. As to quaternary structure, homodimer.

Its subcellular location is the plastid. The protein resides in the chloroplast inner membrane. The enzyme catalyses picrinine + S-adenosyl-L-methionine = ervincine + S-adenosyl-L-homocysteine + H(+). The protein operates within alkaloid biosynthesis; vindoline biosynthesis. In terms of biological role, S-adenosyl-L-methionine-dependent N-methyltransferase involved in the biosynthesis of biologically active monoterpenoid indole alkaloids (MIAs) natural products including vindoline. Inactive with picrinine as substrate. This is Gamma-tocopherol methyltransferase, chloroplastic from Catharanthus roseus (Madagascar periwinkle).